Reading from the N-terminus, the 231-residue chain is Androgen-dependent TFPI-regulating protein (231 aa).

Residues 1 to 7 (MTRTTTC) are Cytoplasmic-facing. A helical membrane pass occupies residues 8–28 (VYHFLVWNWYIFLNYYIPLIG). Topologically, residues 29–45 (KDDEKLKEFHDGGRSKY) are extracellular. A helical membrane pass occupies residues 46 to 66 (LTLLNLLLQAIFFGVACLDDV). The Cytoplasmic segment spans residues 67 to 85 (LKRIIGRKDIKFITSTRDL). The chain crosses the membrane as a helical span at residues 86 to 106 (LFSTLVFPISTFIFLVFWTLF). Over 107-123 (YYDRSLIYPKGLDDYFP) the chain is Extracellular. A helical membrane pass occupies residues 124–144 (AWLNHAMHTYILLFVLVETIL). At 145–154 (RPHHYPSKKL) the chain is on the cytoplasmic side. A helical transmembrane segment spans residues 155 to 172 (GLALLGACNLAYITRVLW). Topologically, residues 173–190 (RYSQTGNWVYPVFASLNP) are extracellular. Residues 191–211 (LGIIIFFLVCYILNASIYLVG) traverse the membrane as a helical segment. Over 212-231 (EKINHWKWGATVKPLMKKKK) the chain is Cytoplasmic.

The protein belongs to the AIG1 family. Highly expressed in flank organs and weakly in testis and earlobes.

The protein resides in the cell membrane. The catalysed reaction is 9-hexadecanoyloxy-octadecanoate + H2O = 9-hydroxy-octadecanoate + hexadecanoate + H(+). The enzyme catalyses 12-hexadecanoyloxy-octadecanoate + H2O = 12-hydroxyoctadecanoate + hexadecanoate + H(+). It carries out the reaction 9-(9Z-hexadecenoyloxy)-octadecanoate + H2O = (9Z)-hexadecenoate + 9-hydroxy-octadecanoate + H(+). It catalyses the reaction 12-(9Z-hexadecenoyloxy)-octadecanoate + H2O = 12-hydroxyoctadecanoate + (9Z)-hexadecenoate + H(+). The catalysed reaction is 13-(9Z-hexadecenoyloxy)-octadecanoate + H2O = 13-hydroxy-octadecanoate + (9Z)-hexadecenoate + H(+). The enzyme catalyses 9-octadecanoyloxy-octadecanoate + H2O = 9-hydroxy-octadecanoate + octadecanoate + H(+). It carries out the reaction 12-octadecanoyloxy-octadecanoate + H2O = 12-hydroxyoctadecanoate + octadecanoate + H(+). It catalyses the reaction 13-octadecanoyloxy-octadecanoate + H2O = 13-hydroxy-octadecanoate + octadecanoate + H(+). The catalysed reaction is 9-(9Z-octadecenoyloxy)-octadecanoate + H2O = 9-hydroxy-octadecanoate + (9Z)-octadecenoate + H(+). The enzyme catalyses 12-(9Z-octadecenoyloxy)-octadecanoate + H2O = 12-hydroxyoctadecanoate + (9Z)-octadecenoate + H(+). It carries out the reaction 13-(9Z-octadecenoyloxy)-octadecanoate + H2O = 13-hydroxy-octadecanoate + (9Z)-octadecenoate + H(+). It catalyses the reaction 5-(9Z-octadecenoyloxy)-octadecanoate + H2O = 5-hydroxy-octadecanoate + (9Z)-octadecenoate + H(+). Functionally, hydrolyzes bioactive fatty-acid esters of hydroxy-fatty acids (FAHFAs), but not other major classes of lipids. Shows a preference for FAHFAs with branching distal from the carboxylate head group of the lipids. Regulates the expression and the cell-associated anticoagulant activity of the inhibitor TFPI in endothelial cells (in vitro). The polypeptide is Androgen-dependent TFPI-regulating protein (ADTRP) (Mesocricetus auratus (Golden hamster)).